A 182-amino-acid chain; its full sequence is uncharacterized protein (182 aa).

Helical transmembrane passes span 76–96 and 114–130; these read LLLAMSTLKICPLNLVFLALA and LDLLFVSLTTTACLIGA.

It is found in the membrane. This is an uncharacterized protein from Saccharomyces cerevisiae (strain ATCC 204508 / S288c) (Baker's yeast).